The primary structure comprises 37 residues: Large ribosomal subunit protein bL36A (37 aa).

Belongs to the bacterial ribosomal protein bL36 family.

This chain is Large ribosomal subunit protein bL36A, found in Neisseria meningitidis serogroup C (strain 053442).